A 343-amino-acid polypeptide reads, in one-letter code: Dihydroorotase (343 aa).

Residues His14 and His16 each contribute to the Zn(2+) site. Substrate is bound by residues 16-18 (HVR) and Asn42. Zn(2+) is bound by residues Lys98, His135, and His173. Lys98 is modified (N6-carboxylysine). Residue His135 coordinates substrate. Leu219 serves as a coordination point for substrate. Asp247 contacts Zn(2+). Asp247 is an active-site residue. His251 and Ala263 together coordinate substrate.

The protein belongs to the metallo-dependent hydrolases superfamily. DHOase family. Class II DHOase subfamily. In terms of assembly, homodimer. Requires Zn(2+) as cofactor.

It catalyses the reaction (S)-dihydroorotate + H2O = N-carbamoyl-L-aspartate + H(+). Its pathway is pyrimidine metabolism; UMP biosynthesis via de novo pathway; (S)-dihydroorotate from bicarbonate: step 3/3. Its function is as follows. Catalyzes the reversible cyclization of carbamoyl aspartate to dihydroorotate. The polypeptide is Dihydroorotase (Marinobacter nauticus (strain ATCC 700491 / DSM 11845 / VT8) (Marinobacter aquaeolei)).